The sequence spans 685 residues: Polyphosphate kinase (685 aa).

Asn-45 contacts ATP. 2 residues coordinate Mg(2+): Arg-372 and Arg-402. The 35-residue stretch at 427–461 (PGLKIHAKLFLISRKEGDDVVRYAHIGTGNFNEKT) folds into the PLD phosphodiesterase 1 domain. The Phosphohistidine intermediate role is filled by His-432. ATP contacts are provided by Tyr-465, Arg-561, and His-589. In terms of domain architecture, PLD phosphodiesterase 2 spans 584–614 (DRYLEHDRIYIFDNAGDKQVYLSSADWMTRN).

It belongs to the polyphosphate kinase 1 (PPK1) family. Mg(2+) is required as a cofactor. An intermediate of this reaction is the autophosphorylated ppk in which a phosphate is covalently linked to a histidine residue through a N-P bond.

It carries out the reaction [phosphate](n) + ATP = [phosphate](n+1) + ADP. In terms of biological role, catalyzes the reversible transfer of the terminal phosphate of ATP to form a long-chain polyphosphate (polyP). The chain is Polyphosphate kinase from Klebsiella pneumoniae.